Reading from the N-terminus, the 466-residue chain is 3-isopropylmalate dehydratase large subunit (466 aa).

Residues Cys345, Cys405, and Cys408 each coordinate [4Fe-4S] cluster.

It belongs to the aconitase/IPM isomerase family. LeuC type 1 subfamily. As to quaternary structure, heterodimer of LeuC and LeuD. It depends on [4Fe-4S] cluster as a cofactor.

The catalysed reaction is (2R,3S)-3-isopropylmalate = (2S)-2-isopropylmalate. It participates in amino-acid biosynthesis; L-leucine biosynthesis; L-leucine from 3-methyl-2-oxobutanoate: step 2/4. Catalyzes the isomerization between 2-isopropylmalate and 3-isopropylmalate, via the formation of 2-isopropylmaleate. This chain is 3-isopropylmalate dehydratase large subunit, found in Microcystis aeruginosa (strain NIES-843 / IAM M-2473).